We begin with the raw amino-acid sequence, 398 residues long: MSEGNAAGEPSNPGGPRPLLSGGRGLIGRRPAPPLTPGRLPSIRSRDLTLGGVKKKTFTPNIISRKIKEEPKEEVTMKKEKRERDRDRQREGHGRGRGRPEVIQSHSIFEQGPAEMMKKKGNWDKTVDMSDMGPSHIINIKKEKRETDEETKQILRMLEKDDFIDDPGLKNDTRNMPVQLPLAHSGWLFKEESEEPEAKPFSAGPKEEDMEVDVPAVKVKEEPRDEEEEAKVKAPPRAARKTPGLPKDVSVAELLRELSLMKDEELLFLQLPDTLPGQPPTQDIKPVKTEVQGEDGQMVVIKQEKDREARLAENACTLADLTEGQVGKLLIRKSGKVQLLLGKVTLDVTMGTTCSFLQELVSVGLGDSRTGEMTVLGHVKHKLVCSPDFESLLDHKHR.

Residues 1-149 (MSEGNAAGEP…IKKEKRETDE (149 aa)) form a disordered region. Position 2 is an N-acetylserine (S2). A Phosphoserine modification is found at S42. Composition is skewed to basic and acidic residues over residues 66-100 (KIKEEPKEEVTMKKEKRERDRDRQREGHGRGRGRP), 116-128 (MMKKKGNWDKTVD), and 140-149 (IKKEKRETDE). Residues K68 and K78 each participate in a glycyl lysine isopeptide (Lys-Gly) (interchain with G-Cter in SUMO2) cross-link. 3 positions are modified to omega-N-methylarginine: R95, R97, and R99. Glycyl lysine isopeptide (Lys-Gly) (interchain with G-Cter in SUMO2) cross-links involve residues K141, K152, K160, K190, K199, K206, K220, K285, K302, and K396. Residues 191 to 244 (EESEEPEAKPFSAGPKEEDMEVDVPAVKVKEEPRDEEEEAKVKAPPRAARKTPG) form a disordered region.

This sequence belongs to the eukaryotic RPC4/POLR3D RNA polymerase subunit family. In terms of assembly, component of the RNA polymerase III complex consisting of 17 subunits: a ten-subunit horseshoe-shaped catalytic core composed of POLR3A/RPC1, POLR3B/RPC2, POLR1C/RPAC1, POLR1D/RPAC2, POLR3K/RPC10, POLR2E/RPABC1, POLR2F/RPABC2, POLR2H/RPABC3, POLR2K/RPABC4 and POLR2L/RPABC5; a mobile stalk composed of two subunits POLR3H/RPC8 and CRCP/RPC9, protruding from the core and functioning primarily in transcription initiation; and additional subunits homologous to general transcription factors of the RNA polymerase II machinery, POLR3C/RPC3-POLR3F/RPC6-POLR3G/RPC7 heterotrimer required for transcription initiation and POLR3D/RPC4-POLR3E/RPC5 heterodimer involved in both transcription initiation and termination. In terms of processing, sumoylation on Lys-141 can serve as a signal to mark misfolded Pol III for proteasomal degradation.

The protein resides in the nucleus. Its function is as follows. DNA-dependent RNA polymerase catalyzes the transcription of DNA into RNA using the four ribonucleoside triphosphates as substrates. Specific peripheric component of RNA polymerase III (Pol III) which synthesizes small non-coding RNAs including 5S rRNA, snRNAs, tRNAs and miRNAs from at least 500 distinct genomic loci. Enables recruitment of Pol III at transcription initiation site and drives transcription initiation from both type 2 and type 3 DNA promoters. Required for efficient transcription termination and reinitiation. Pol III plays a key role in sensing and limiting infection by intracellular bacteria and DNA viruses. Acts as nuclear and cytosolic DNA sensor involved in innate immune response. Can sense non-self dsDNA that serves as template for transcription into dsRNA. The non-self RNA polymerase III transcripts, such as Epstein-Barr virus-encoded RNAs (EBERs) induce type I interferon and NF-kappa-B through the RIG-I pathway. The chain is DNA-directed RNA polymerase III subunit RPC4 from Mus musculus (Mouse).